The sequence spans 533 residues: NADH-quinone oxidoreductase subunit N (533 aa).

Helical transmembrane passes span Val13 to Val33, Leu40 to Val60, Pro87 to Ala107, His141 to Ala161, Leu164 to Leu184, Phe200 to Phe220, Leu243 to Phe263, Pro275 to Leu295, Gln310 to Val330, Met337 to Gln357, Val373 to Leu393, Val417 to Phe437, Gly451 to Val471, and Ala502 to Leu522.

Belongs to the complex I subunit 2 family. NDH-1 is composed of 14 different subunits. Subunits NuoA, H, J, K, L, M, N constitute the membrane sector of the complex.

The protein resides in the cell membrane. The catalysed reaction is a quinone + NADH + 5 H(+)(in) = a quinol + NAD(+) + 4 H(+)(out). NDH-1 shuttles electrons from NADH, via FMN and iron-sulfur (Fe-S) centers, to quinones in the respiratory chain. The immediate electron acceptor for the enzyme in this species is believed to be a menaquinone. Couples the redox reaction to proton translocation (for every two electrons transferred, four hydrogen ions are translocated across the cytoplasmic membrane), and thus conserves the redox energy in a proton gradient. In Nocardioides sp. (strain ATCC BAA-499 / JS614), this protein is NADH-quinone oxidoreductase subunit N.